We begin with the raw amino-acid sequence, 86 residues long: Putative membrane protein insertion efficiency factor (86 aa).

Belongs to the UPF0161 family.

The protein localises to the cell inner membrane. Could be involved in insertion of integral membrane proteins into the membrane. The sequence is that of Putative membrane protein insertion efficiency factor from Pasteurella multocida (strain Pm70).